The following is a 341-amino-acid chain: Ferredoxin--NADP reductase 2 (341 aa).

FAD is bound by residues aspartate 42, glutamine 50, tyrosine 55, isoleucine 95, phenylalanine 129, aspartate 294, and serine 335.

This sequence belongs to the ferredoxin--NADP reductase type 2 family. As to quaternary structure, homodimer. It depends on FAD as a cofactor.

The enzyme catalyses 2 reduced [2Fe-2S]-[ferredoxin] + NADP(+) + H(+) = 2 oxidized [2Fe-2S]-[ferredoxin] + NADPH. The protein is Ferredoxin--NADP reductase 2 of Chloroherpeton thalassium (strain ATCC 35110 / GB-78).